Here is a 506-residue protein sequence, read N- to C-terminus: Gamma-aminobutyric acid receptor subunit epsilon (506 aa).

Positions 1–22 are cleaved as a signal peptide; the sequence is MLSKVLPVLLGILLILQSRVEG. Positions 23–66 are disordered; that stretch reads PQTESKNEASSRDVVYGPQPQPLENQLLSEETKSTETETGSRVG. Over 23 to 280 the chain is Extracellular; sequence PQTESKNEAS…FNVSRRFGYV (258 aa). A glycan (N-linked (GlcNAc...) asparagine) is linked at Asn-134. Residues Cys-195 and Cys-209 are joined by a disulfide bond. An N-linked (GlcNAc...) asparagine glycan is attached at Asn-252. The helical transmembrane segment at 281 to 301 threads the bilayer; that stretch reads AFQNYVPSSVTTMLSWVSFWI. The Cytoplasmic segment spans residues 302-307; the sequence is KTESAP. Residues 308 to 327 form a helical membrane-spanning segment; the sequence is ARTSLGITSVLTMTTLGTFS. Residues 328–343 are Extracellular-facing; the sequence is RKNFPRVSYITALDFY. The chain crosses the membrane as a helical span at residues 344–364; the sequence is IAICFVFCFCALLEFAVLNFL. Topologically, residues 365–485 are cytoplasmic; the sequence is IYNQTKAHAS…HVYRLDNYSR (121 aa). The tract at residues 413-438 is disordered; it reads EGSDGEERPSCSAQQPPSPGSPEGPR. The chain crosses the membrane as a helical span at residues 486–506; that stretch reads VVFPVTFFFFNVLYWLVCLNL.

It belongs to the ligand-gated ion channel (TC 1.A.9) family. Gamma-aminobutyric acid receptor (TC 1.A.9.5) subfamily. GABRE sub-subfamily. As to quaternary structure, heteropentamer, formed by a combination of alpha (GABRA1-6), beta (GABRB1-3), gamma (GABRG1-3), delta (GABRD), epsilon (GABRE), rho (GABRR1-3), pi (GABRP) and theta (GABRQ) chains, each subunit exhibiting distinct physiological and pharmacological properties. As to expression, expressed in many tissues. Highest levels of expression in adult heart and placenta.

It is found in the cell membrane. It localises to the postsynaptic cell membrane. It catalyses the reaction chloride(in) = chloride(out). Potentiated by pentobarbital, loreclezole, and lanthanum and inhibited by zinc and furosemide. Introduction of the epsilon subunit to the receptor complex resulted in diminished modulatory effects by etomidate, propofol, pregnanolone and flurazepam. Functionally, epsilon subunit of the heteropentameric ligand-gated chloride channel gated by gamma-aminobutyric acid (GABA), a major inhibitory neurotransmitter in the brain. GABA-gated chloride channels, also named GABA(A) receptors (GABAAR), consist of five subunits arranged around a central pore and contain GABA active binding site(s) located at the alpha and beta subunit interfaces. When activated by GABA, GABAARs selectively allow the flow of chloride anions across the cell membrane down their electrochemical gradient. GABAARs containing epsilon subunits also permit spontaneous chloride channel activity while preserving the structural information required for GABA-gated openings. GABARs containing epsilon subunit may regulate cardiac function. The sequence is that of Gamma-aminobutyric acid receptor subunit epsilon from Homo sapiens (Human).